Reading from the N-terminus, the 266-residue chain is Nus factor SuhB (266 aa).

86–89 lines the substrate pocket; that stretch reads LDGI.

It belongs to the inositol monophosphatase superfamily. Homodimer. The rRNA transcription and antitermination complex (rrnTAC) consists of RNA polymerase (RNAP), NusA, NusB, NusE (rpsJ), NusG, SubB, ribosomal protein S4, DNA and precursor rRNA; S4 is more flexible than other subunits. Requires Mg(2+) as cofactor.

The protein resides in the cytoplasm. The catalysed reaction is a myo-inositol phosphate + H2O = myo-inositol + phosphate. Its function is as follows. Part of the processive rRNA transcription and antitermination complex (rrnTAC). The complex forms an RNA-chaperone ring around the RNA exit tunnel of RNA polymerase (RNAP). It supports rapid transcription and antitermination of rRNA operons, cotranscriptional rRNA folding, and annealing of distal rRNA regions to allow correct ribosome biogenesis. This subunit may play a central role in organizing the structure. This chain is Nus factor SuhB (suhB), found in Buchnera aphidicola subsp. Baizongia pistaciae (strain Bp).